A 156-amino-acid polypeptide reads, in one-letter code: C-type lectin lectoxin-Lei1 (156 aa).

An N-terminal signal peptide occupies residues 1–23 (MRRFLFLSLGVLVVAFSLNGIGA). Disulfide bonds link cysteine 27–cysteine 38, cysteine 55–cysteine 154, and cysteine 129–cysteine 146. A C-type lectin domain is found at 34–155 (FDRFCYKVIK…CESRNIFICK (122 aa)). Asparagine 60 and asparagine 99 each carry an N-linked (GlcNAc...) asparagine glycan. Residues 119–121 (KRN) carry the Sugar-binding motif. Asparagine 142 contacts Ca(2+).

Belongs to the true venom lectin family. Expressed by the venom gland.

It is found in the secreted. In terms of biological role, lectin which recognizes specific carbohydrate structures and agglutinates a variety of animal cells by binding to cell-surface glycoproteins and glycolipids. May be a calcium-dependent lectin. The protein is C-type lectin lectoxin-Lei1 of Leioheterodon madagascariensis (Malagasy giant hognose snake).